A 166-amino-acid chain; its full sequence is MEFTGRVWKFGKDIDTDAIIPARYLNTTSPEELAKHCMEDADPSFPQKVRKGDIIVADKNFGCGSSREHAPIAIKAAGVPCVIAKSFARIFFRNAINIGLPIFECPEAVDGIREGDVVQVNADRGVIFNMTTGQTYTAKALPASMQSIIQAGGLMQYVKTRVAEGK.

This sequence belongs to the LeuD family. LeuD type 2 subfamily. Heterodimer of LeuC and LeuD.

The enzyme catalyses (2R,3S)-3-isopropylmalate = (2S)-2-isopropylmalate. Its pathway is amino-acid biosynthesis; L-leucine biosynthesis; L-leucine from 3-methyl-2-oxobutanoate: step 2/4. Catalyzes the isomerization between 2-isopropylmalate and 3-isopropylmalate, via the formation of 2-isopropylmaleate. In Heliobacterium modesticaldum (strain ATCC 51547 / Ice1), this protein is 3-isopropylmalate dehydratase small subunit.